Here is a 164-residue protein sequence, read N- to C-terminus: 16S rRNA aminocarboxypropyltransferase (164 aa).

S-adenosyl-L-methionine is bound by residues T18, I66, L87, and S106.

This sequence belongs to the TDD superfamily. TSR3 family.

The protein localises to the cytoplasm. It carries out the reaction an N(1)-methylpseudouridine in rRNA + S-adenosyl-L-methionine = N(1)-methyl-N(3)-[(3S)-3-amino-3-carboxypropyl]pseudouridine in rRNA + S-methyl-5'-thioadenosine + H(+). In terms of biological role, aminocarboxypropyltransferase that catalyzes the aminocarboxypropyl transfer on pseudouridine corresponding to position 914 in M.jannaschii 16S rRNA. It constitutes the last step in biosynthesis of the hypermodified N1-methyl-N3-(3-amino-3-carboxypropyl) pseudouridine (m1acp3-Psi). This chain is 16S rRNA aminocarboxypropyltransferase, found in Thermoplasma volcanium (strain ATCC 51530 / DSM 4299 / JCM 9571 / NBRC 15438 / GSS1).